The following is a 357-amino-acid chain: Acyl-coenzyme A diphosphatase NUDT19 (357 aa).

The region spanning 10-242 (AATVMLAAGW…IWLAPPQFYE (233 aa)) is the Nudix hydrolase domain. The interval 72-93 (PRFGLGPEPPRQPPFPGLSHGD) is disordered. The segment covering 78 to 87 (PEPPRQPPFP) has biased composition (pro residues). Positions 97–118 (AALPDDVALRICAIREAFEEAG) match the Nudix box motif. Glu112 and Glu116 together coordinate Mg(2+). Lys300 bears the N6-succinyllysine mark. The Microbody targeting signal signature appears at 355–357 (AHL).

This sequence belongs to the Nudix hydrolase family. In terms of assembly, monomer. Mg(2+) is required as a cofactor. Mn(2+) serves as cofactor. As to expression, highly expressed in the kidneys, with lower levels in skeletal muscle and brain (at protein level).

It localises to the peroxisome. It catalyses the reaction an acyl-CoA + H2O = an acyl-4'-phosphopantetheine + adenosine 3',5'-bisphosphate + 2 H(+). The catalysed reaction is CoA + H2O = (R)-4'-phosphopantetheine + adenosine 3',5'-bisphosphate + 2 H(+). The enzyme catalyses hexanoyl-CoA + H2O = hexanoyl-4'-phosphopantetheine + adenosine 3',5'-bisphosphate + 2 H(+). It carries out the reaction octanoyl-CoA + H2O = S-octanoyl-4'-phosphopantetheine + adenosine 3',5'-bisphosphate + 2 H(+). It catalyses the reaction butanoyl-CoA + H2O = S-butanoyl-4'-phosphopantetheine + adenosine 3',5'-bisphosphate + 2 H(+). The catalysed reaction is propanoyl-CoA + H2O = propanoyl-4'-phosphopantetheine + adenosine 3',5'-bisphosphate + 2 H(+). The enzyme catalyses malonyl-CoA + H2O = malonyl-4'-phosphopantetheine + adenosine 3',5'-bisphosphate + 2 H(+). It carries out the reaction succinyl-CoA + H2O = succinyl-4'-phosphopantetheine + adenosine 3',5'-bisphosphate + 2 H(+). It catalyses the reaction choloyl-CoA + H2O = S-choloyl-4'-phosphopantetheine + adenosine 3',5'-bisphosphate + 2 H(+). The catalysed reaction is 4,8-dimethylnonanoyl-CoA + H2O = S-(4,8-dimethylnonanoyl)-4'-phosphopantetheine + adenosine 3',5'-bisphosphate + 2 H(+). The enzyme catalyses (9Z,12Z,15Z)-octadecatrienoyl-CoA + H2O = S-(9Z,12Z,15Z-octadecatrienoyl)-4'-phosphopantetheine + adenosine 3',5'-bisphosphate + 2 H(+). It carries out the reaction (9Z,12Z)-octadecadienoyl-CoA + H2O = S-(9Z,12Z-octadecadienoyl)-4'-phosphopantetheine + adenosine 3',5'-bisphosphate + 2 H(+). It catalyses the reaction (9Z)-hexadecenoyl-CoA + H2O = S-(9Z-hexadecenoyl)-4'-phosphopantetheine + adenosine 3',5'-bisphosphate + 2 H(+). The catalysed reaction is (9Z)-tetradecenoyl-CoA + H2O = S-(9Z-tetradecenoyl)-4'-phosphopantetheine + adenosine 3',5'-bisphosphate + 2 H(+). The enzyme catalyses (6Z)-octenoyl-CoA + H2O = S-(6Z-octenoyl)-4'-phosphopantetheine + adenosine 3',5'-bisphosphate + 2 H(+). It carries out the reaction hexadecanoyl-CoA + H2O = S-hexadecanoyl-4'-phosphopantetheine + adenosine 3',5'-bisphosphate + 2 H(+). It catalyses the reaction tetradecanoyl-CoA + H2O = tetradecanoyl-4'-phosphopantetheine + adenosine 3',5'-bisphosphate + 2 H(+). The catalysed reaction is dodecanoyl-CoA + H2O = S-dodecanoyl-4'-phosphopantetheine + adenosine 3',5'-bisphosphate + 2 H(+). The enzyme catalyses a 5'-end CoA-ribonucleoside in mRNA + H2O = a 5'-end phospho-adenosine-phospho-ribonucleoside in mRNA + (R)-4'-phosphopantetheine + 2 H(+). With respect to regulation, inhibited by chenodeoxycholic acid (CDCA) and its conjugated derivatives, taurochenodeoxycholic acid and glycochenodeoxycholic acid. Inhibited by fluoride. Functionally, fatty acyl-coenzyme A (CoA) diphosphatase that hydrolyzes fatty acyl-CoA to yield acyl-4'-phosphopantetheine and adenosine 3',5'-bisphosphate. Mediates the hydrolysis of a wide range of CoA esters, including choloyl-CoA and branched-chain fatty-acyl-CoA esters and at low substrate concentrations medium and long-chain fatty-acyl-CoA esters are the primary substrates. Highest activity seen with medium-chain acyl-CoA esters and higher rates of activity seen with the unsaturated acyl-CoA esters compared with the saturated esters. Exhibits decapping activity towards dpCoA-capped RNAs in vitro. The protein is Acyl-coenzyme A diphosphatase NUDT19 (Nudt19) of Mus musculus (Mouse).